Here is a 348-residue protein sequence, read N- to C-terminus: MNLPKNGMTYADAGVDIDAGNALVDRIKPAAKRTNRSGVMAGLGGFGALFDLKDAGYTDPILVAATDGVGTKLRIAIDTGHVDGVGIDLVAMCVNDLVCQGAEPLFFLDYFATGALETDKAARIIEGIALGCERAGCALIGGETAEMPGMYPAGDFDLAGFSVGAMERGAALPAHVAQGDVLLGLASDGVHSNGYSLVRKLVEVSGLSWDAPCPWAEQSLGAELLTPTRLYVKQALAAIDAGGVHALAHITGGGLTENLPRVLPEGLGADIDLSTWSLPAVFGWMAQTGGMQEAEMLKTFNCGIGMILVVAQEEADKLTQLLASLGEDVARIGHVSAREGVRYSGTLL.

This sequence belongs to the AIR synthase family.

Its subcellular location is the cytoplasm. It carries out the reaction 2-formamido-N(1)-(5-O-phospho-beta-D-ribosyl)acetamidine + ATP = 5-amino-1-(5-phospho-beta-D-ribosyl)imidazole + ADP + phosphate + H(+). It functions in the pathway purine metabolism; IMP biosynthesis via de novo pathway; 5-amino-1-(5-phospho-D-ribosyl)imidazole from N(2)-formyl-N(1)-(5-phospho-D-ribosyl)glycinamide: step 2/2. This is Phosphoribosylformylglycinamidine cyclo-ligase from Roseobacter denitrificans (strain ATCC 33942 / OCh 114) (Erythrobacter sp. (strain OCh 114)).